The chain runs to 459 residues: MSKVWSNRFDGSLNPFIEEFNASISFDKTLILEDIECSIAHAKMLSKTKVLSTDESLKIIEGLETIKEKFIEGKFCPGAPSEDIHYCIEEKLINLIGETGKKLHTGRSRNDQVGTDIRLWLRKKIDNIDILLYELQNSLFSIAESNIYTLIPGYTHMQRAQPLSLAHHLLAYLEMFQRDRERLKEVRARVNISPLGAAALAGTKIKIDRYFTAEELGFGNIYKNSIDAVSDRDFCIEFASSSALIMSHLSRISEEIILWVTDEFSFAKLTDKCATGSSLMPQKKNPDVPELIRGKTGRVYGHLQSLLTMIKGVPLSYNKDFQEDKEPIFDTVDTISSCLKAMTILLNEGIEFNVEKLMDSVHNDFSNATDLADYLVFKKVPFREAYQVVGDIVKYCLSKNILFKDLQLEEFQTFHNEFKEDIYENLNPMNVVKSRNSLGGTGFDQVKLELNNWKKKLFT.

It belongs to the lyase 1 family. Argininosuccinate lyase subfamily.

The protein resides in the cytoplasm. It carries out the reaction 2-(N(omega)-L-arginino)succinate = fumarate + L-arginine. It functions in the pathway amino-acid biosynthesis; L-arginine biosynthesis; L-arginine from L-ornithine and carbamoyl phosphate: step 3/3. The sequence is that of Argininosuccinate lyase from Prochlorococcus marinus subsp. pastoris (strain CCMP1986 / NIES-2087 / MED4).